A 46-amino-acid chain; its full sequence is Mu-segestritoxin-Sf1b (46 aa).

4 disulfide bridges follow: Cys-3-Cys-19, Cys-10-Cys-22, Cys-18-Cys-42, and Cys-24-Cys-40. The keys region for toxin activity stretch occupies residues 31–33 (RPW).

It belongs to the neurotoxin 16 (SFI) family. In terms of tissue distribution, expressed by the venom gland.

Its subcellular location is the secreted. Functionally, insecticidal toxin. Causes flaccid paralysis followed by death when injected into Heliothis virescens larvae. Does not induce any toxic effects when injected intravenously into adult mice at a dose of 1.25 mg/kg body weight. This chain is Mu-segestritoxin-Sf1b, found in Segestria florentina (Tube-web spider).